The chain runs to 88 residues: Small cysteine-rich outer membrane protein OmcA (88 aa).

The signal sequence occupies residues 1-18 (MKKTALLAALCSVVSLSS). Residue Cys-19 is the site of N-palmitoyl cysteine attachment. The S-diacylglycerol cysteine moiety is linked to residue Cys-19.

As to quaternary structure, part of a disulfide cross-linked outer membrane complex (COMC) composed of the major outer membrane porin (MOMP), the small cysteine-rich protein (OmcA) and the large cysteine-rich periplasmic protein (OmcB).

The protein localises to the cell outer membrane. Its function is as follows. In elementary bodies (EBs, the infectious stage, which is able to survive outside the host cell) provides the structural integrity of the outer envelope through disulfide cross-links with the large cysteine-rich periplasmic protein and the major outer membrane porin. It has been described in publications as the Sarkosyl-insoluble COMC (Chlamydia outer membrane complex), and serves as the functional equivalent of peptidoglycan. This is Small cysteine-rich outer membrane protein OmcA (omcA) from Chlamydia muridarum (strain MoPn / Nigg).